Consider the following 866-residue polypeptide: Putative linoleate 9S-lipoxygenase 3 (866 aa).

Positions 33–161 (NDFGATVIDG…KYRYDRVFFA (129 aa)) constitute a PLAT domain. The Lipoxygenase domain maps to 164–866 (AYLPSQMPAA…AKGIPNSISI (703 aa)). The interval 206–250 (YNDLGSPDSGNPRPILGGSPDTPYPRRGRTGRKPTTTDPDSESRL) is disordered. Positions 521, 526, 712, 716, and 866 each coordinate Fe cation.

This sequence belongs to the lipoxygenase family. The cofactor is Fe cation.

It carries out the reaction (9Z,12Z)-octadecadienoate + O2 = (9S)-hydroperoxy-(10E,12Z)-octadecadienoate. It functions in the pathway lipid metabolism; oxylipin biosynthesis. Functionally, plant lipoxygenase may be involved in a number of diverse aspects of plant physiology including growth and development, pest resistance, and senescence or responses to wounding. Catalyzes the hydroperoxidation of lipids containing a cis,cis-1,4-pentadiene structure. In Oryza sativa subsp. japonica (Rice), this protein is Putative linoleate 9S-lipoxygenase 3.